Reading from the N-terminus, the 535-residue chain is CTP synthase (535 aa).

Positions 1–270 (MSKNTKYVFV…DRLVCEKLGL (270 aa)) are amidoligase domain. S16 is a CTP binding site. S16 serves as a coordination point for UTP. ATP is bound at residue 17–22 (SLGKGI). Y57 provides a ligand contact to L-glutamine. D74 serves as a coordination point for ATP. The Mg(2+) site is built by D74 and E144. CTP-binding positions include 151–153 (DIE), 191–196 (KTKPTQ), and K227. UTP contacts are provided by residues 191–196 (KTKPTQ) and K227. In terms of domain architecture, Glutamine amidotransferase type-1 spans 295-535 (KIALVGKYVE…GFVGAALNNK (241 aa)). L-glutamine is bound at residue G357. The active-site Nucleophile; for glutamine hydrolysis is the C384. L-glutamine is bound by residues 385–388 (LGMQ), E408, and R465. Residues H510 and E512 contribute to the active site.

The protein belongs to the CTP synthase family. As to quaternary structure, homotetramer.

The enzyme catalyses UTP + L-glutamine + ATP + H2O = CTP + L-glutamate + ADP + phosphate + 2 H(+). The catalysed reaction is L-glutamine + H2O = L-glutamate + NH4(+). It catalyses the reaction UTP + NH4(+) + ATP = CTP + ADP + phosphate + 2 H(+). The protein operates within pyrimidine metabolism; CTP biosynthesis via de novo pathway; CTP from UDP: step 2/2. Allosterically activated by GTP, when glutamine is the substrate; GTP has no effect on the reaction when ammonia is the substrate. The allosteric effector GTP functions by stabilizing the protein conformation that binds the tetrahedral intermediate(s) formed during glutamine hydrolysis. Inhibited by the product CTP, via allosteric rather than competitive inhibition. Its function is as follows. Catalyzes the ATP-dependent amination of UTP to CTP with either L-glutamine or ammonia as the source of nitrogen. Regulates intracellular CTP levels through interactions with the four ribonucleotide triphosphates. This Clostridium perfringens (strain ATCC 13124 / DSM 756 / JCM 1290 / NCIMB 6125 / NCTC 8237 / Type A) protein is CTP synthase.